Consider the following 769-residue polypeptide: Scarecrow-like protein 14 (769 aa).

Disordered stretches follow at residues 1–23, 128–157, 279–320, and 364–388; these read MGSYPDGFPGSMDELDFNKDFDL, PSSSSASSVDHPERLASDSPDGSCSGGAFS, TEKK…ERSN, and TAQSNGAKIRGKKSTSTSHSNDSKK. A GRAS domain is found at 384-765; it reads NDSKKETADL…RIVYASSLWV (382 aa). Positions 391–451 are leucine repeat I (LRI); that stretch reads ADLRTLLVLC…EARLAGTGTQ (61 aa). The segment at 470–536 is VHIID; sequence YQTYMSVCPF…GGSPKLRITG (67 aa). Positions 501-505 match the VHIID motif; sequence IHIID. The leucine repeat II (LRII) stretch occupies residues 552–584; it reads ETGHRLARYCQRHNVPFEYNAIAQKWETIQVED. The tract at residues 593–687 is PFYRE; sequence VVVNSLFRFR…KEFYGREIVN (95 aa). Residues 690 to 765 form an SAW region; sequence ACEGTERVER…RIVYASSLWV (76 aa).

It belongs to the GRAS family. Expressed in roots, shoots, flowers and siliques.

Its subcellular location is the nucleus. In terms of biological role, probable transcription factor involved in plant development. This is Scarecrow-like protein 14 (SCL14) from Arabidopsis thaliana (Mouse-ear cress).